Consider the following 329-residue polypeptide: CDP-6-deoxy-L-threo-D-glycero-4-hexulose-3-dehydrase reductase (329 aa).

Residues 2–93 enclose the 2Fe-2S ferredoxin-type domain; that stretch reads SLNVKLHPSG…ELDVNYYPEL (92 aa). Positions 37, 42, 45, and 75 each coordinate [2Fe-2S] cluster. The 100-residue stretch at 98-197 folds into the FAD-binding FR-type domain; it reads KKTYPCKLDS…EGPQGTFFVR (100 aa).

Monomer.

Its pathway is nucleotide-sugar biosynthesis; CDP-ascarylose biosynthesis. It participates in bacterial outer membrane biogenesis; lipopolysaccharide biosynthesis. In terms of biological role, participates in the conversion of CDP-6-deoxy-D-glycero-L-threo-4-hexulose to 3,6-dideoxy-D-glycero-D-glycero-4-hexulose together with CDP-6-deoxy-D-glycero-L-threo-4-hexulose-3-dehydrase (E1) in two consecutive steps. The detailed mechanism of E3 is not yet resolved. This chain is CDP-6-deoxy-L-threo-D-glycero-4-hexulose-3-dehydrase reductase (ascD), found in Yersinia pestis.